Here is a 470-residue protein sequence, read N- to C-terminus: MNRRLLVRSISCFQPLSRITFGRPNTPFLRKYADTSTAANTNSTILRKQLLSLKPISASDSLFISCTVFNSKGNIISMSEKFPKWSFLTEHSLFPRDLRKIDNSSIDIIPTIMCKPNCIVINLLHIKALIERDKVYVFDTTNPSAAAKLSVLMYDLESKLSSTKNNSQFYEHRALESIFINVMSALETDFKLHSQICIQILNDLENEVNRLKLRHLLIKSKDLTLFYQKTLLIRDLLDELLENDDDLANMYLTVKKSPKDNFSDLEMLIETYYTQCDEYVQQSESLIQDIKSTEEIVNIILDANRNSLMLLELKVTIYTLGFTVASVLPAFYGMNLKNFIEESEWGFTSVAVFSIVSALYITKKNFNSLRSVTKMTMYPNSPANSSVYPKTSASIALTNKLKRRRKWWKSTKQRLGVLLYGSSYTNKANLSNNKINKGFSKVKKFNMENDIKNKQNRDMIWKWLIEDKKN.

The N-terminal 32 residues, 1–32 (MNRRLLVRSISCFQPLSRITFGRPNTPFLRKY), are a transit peptide targeting the mitochondrion. The Mitochondrial matrix segment spans residues 33 to 314 (ADTSTAANTN…RNSLMLLELK (282 aa)). A helical transmembrane segment spans residues 315–333 (VTIYTLGFTVASVLPAFYG). Residues 332–335 (YGMN) carry the YGMN motif. The Mitochondrial intermembrane portion of the chain corresponds to 334 to 344 (MNLKNFIEESE). The chain crosses the membrane as a helical span at residues 345 to 361 (WGFTSVAVFSIVSALYI). Topologically, residues 362–470 (TKKNFNSLRS…WKWLIEDKKN (109 aa)) are mitochondrial matrix.

The protein belongs to the CorA metal ion transporter (MIT) (TC 1.A.35) family. As to quaternary structure, homopentamer. Forms homooligomers. Interacts with MFM1.

The protein resides in the mitochondrion inner membrane. High-conductance magnesium-selective channel that mediates the influx of magnesium into the mitochondrial matrix. Essential for the splicing of mRNA group II introns in mitochondria by affecting mitochondrial magnesium concentrations, which are critical for group II intron splicing. It also suppresses a variety of mitochondrial intron mutations and its absence may disturb the assembly of mitochondrial membrane complexes. In Saccharomyces cerevisiae (strain ATCC 204508 / S288c) (Baker's yeast), this protein is Magnesium transporter MRS2, mitochondrial (MRS2).